A 211-amino-acid chain; its full sequence is Proteasome subunit beta (211 aa).

Residues methionine 1–glycine 8 constitute a propeptide, removed in mature form; by autocatalysis. Threonine 9 acts as the Nucleophile in catalysis.

Belongs to the peptidase T1B family. The 20S proteasome core is composed of 14 alpha and 14 beta subunits that assemble into four stacked heptameric rings, resulting in a barrel-shaped structure. The two inner rings, each composed of seven catalytic beta subunits, are sandwiched by two outer rings, each composed of seven alpha subunits. The catalytic chamber with the active sites is on the inside of the barrel. Has a gated structure, the ends of the cylinder being occluded by the N-termini of the alpha-subunits. Is capped at one or both ends by the proteasome regulatory ATPase, PAN.

Its subcellular location is the cytoplasm. It catalyses the reaction Cleavage of peptide bonds with very broad specificity.. The formation of the proteasomal ATPase PAN-20S proteasome complex, via the docking of the C-termini of PAN into the intersubunit pockets in the alpha-rings, triggers opening of the gate for substrate entry. Interconversion between the open-gate and close-gate conformations leads to a dynamic regulation of the 20S proteasome proteolysis activity. Its function is as follows. Component of the proteasome core, a large protease complex with broad specificity involved in protein degradation. The T.acidophilum proteasome is able to cleave oligopeptides after Tyr, Leu, Phe, and to a lesser extent after Glu and Arg. Thus, displays chymotrypsin-like activity and low level of caspase-like and trypsin-like activities. The polypeptide is Proteasome subunit beta (Thermoplasma acidophilum (strain ATCC 25905 / DSM 1728 / JCM 9062 / NBRC 15155 / AMRC-C165)).